The sequence spans 272 residues: Formamidopyrimidine-DNA glycosylase (272 aa).

The active-site Schiff-base intermediate with DNA is proline 2. Glutamate 3 serves as the catalytic Proton donor. Catalysis depends on lysine 56, which acts as the Proton donor; for beta-elimination activity. DNA contacts are provided by histidine 89, arginine 108, and lysine 149. An FPG-type zinc finger spans residues 234 to 268; sequence LAYGRAGEMCVNCETPLENLKLGQRASVFCPQCQP. The Proton donor; for delta-elimination activity role is filled by arginine 258.

Belongs to the FPG family. Monomer. Zn(2+) serves as cofactor.

The enzyme catalyses Hydrolysis of DNA containing ring-opened 7-methylguanine residues, releasing 2,6-diamino-4-hydroxy-5-(N-methyl)formamidopyrimidine.. It carries out the reaction 2'-deoxyribonucleotide-(2'-deoxyribose 5'-phosphate)-2'-deoxyribonucleotide-DNA = a 3'-end 2'-deoxyribonucleotide-(2,3-dehydro-2,3-deoxyribose 5'-phosphate)-DNA + a 5'-end 5'-phospho-2'-deoxyribonucleoside-DNA + H(+). Its function is as follows. Involved in base excision repair of DNA damaged by oxidation or by mutagenic agents. Acts as a DNA glycosylase that recognizes and removes damaged bases. Has a preference for oxidized purines, such as 7,8-dihydro-8-oxoguanine (8-oxoG). Has AP (apurinic/apyrimidinic) lyase activity and introduces nicks in the DNA strand. Cleaves the DNA backbone by beta-delta elimination to generate a single-strand break at the site of the removed base with both 3'- and 5'-phosphates. This is Formamidopyrimidine-DNA glycosylase from Acinetobacter baylyi (strain ATCC 33305 / BD413 / ADP1).